Here is a 365-residue protein sequence, read N- to C-terminus: Glycerol dehydrogenase (365 aa).

NAD(+) is bound by residues Asp37, Gly94, Lys95, Thr116, and Ser119. Asp121 lines the glycerol pocket. NAD(+) is bound by residues Ser125, Leu127, and Tyr131. 3 residues coordinate Mn(2+): Asp171, His254, and His271. His254 is a binding site for glycerol.

The protein belongs to the iron-containing alcohol dehydrogenase family. Homohexamer. The cofactor is Mn(2+).

It carries out the reaction glycerol + NAD(+) = dihydroxyacetone + NADH + H(+). It catalyses the reaction hydroxyacetone + NADH + H(+) = (S)-propane-1,2-diol + NAD(+). It functions in the pathway polyol metabolism; glycerol fermentation; glycerone phosphate from glycerol (oxidative route): step 1/2. With respect to regulation, inhibited by zinc. Its function is as follows. Catalyzes the NAD-dependent oxidation of glycerol to dihydroxyacetone (glycerone). Allows microorganisms to utilize glycerol as a source of carbon under anaerobic conditions. Exhibits a rather broad substrate specificity since it can also oxidize 1,2-propanediol and 2,3-butanediol and reduce dihydroxyacetone. Cannot use NADP(+) as an electron acceptor for the oxidation of glycerol. This Citrobacter freundii protein is Glycerol dehydrogenase.